Reading from the N-terminus, the 620-residue chain is MEEQVLPELDVAELELQAVIGFNGHVPNGLKCHPDQEHLIYPLGCTVLIQAINTNEQNFLHGHGNNVSCVTISKEGDYIASGQVTFMGFKADIILWDFKKRELIARLSLHKGKIEALAFSPNDLYLVSLGGPDDGSVVVWSIAKRDAICGSPAAGLNVGNATSVVFSRCRDEMFVTAGNGTIRVWELDLPNRKIWPTECQTGQMKRIVLSTGMADDDSFFYLGTTTGDILKMNPKTKLLADTGPVKDKFSLGVSALRCLKMGGLLVGSGAGLLIFCKSPSYKPIKKVQLQGGITSITLRGEGHQFFVGTEESHIYRVNFTDFKETLIATCHFEAVQDIVFPFGTAELFATCAKKDIRVWHTMSKRELLRITVPNMTCHGIDFMRDGKSIISAWDDGKIRAFAPESGRLMYTINSAHRIGVTAIATTSDCKRIISGGGEGEVRVWQVGCQTQKLEEALKEHKSSVSCIRVKKNNEECVTASTDGTCIIWDLVRLRRNQMILANTLFQCVCYHPEEFQIITSGTDRKIAYWEVFDGSVIRELEGSLSGSINGMDITQEGGHFVTGGHDHLVKVWDYNEGEVTHVGVGHSGNIMAMRISPGNQYIVSVSADGAILRWKYPFAS.

WD repeat units lie at residues 62-106 (GHGN…LIAR), 109-150 (LHKG…AICG), 156-195 (LNVG…RKIW), 288-327 (QLQG…ETLI), 330-369 (CHFE…ELLR), 372-411 (VPNM…LMYT), 415-454 (AHRI…QKLE), 459-498 (EHKS…RNQM), 500-541 (LANT…RELE), 543-582 (SLSG…VTHV), and 585-620 (GHSG…PFAS).

This sequence belongs to the CFAP52 family. In terms of assembly, microtubule inner protein component of sperm flagellar doublet microtubules. Interacts with BRCA2. Interacts with the CCT chaperonin complex. Interacts with HSP70. Interacts with AK8. Interacts with CFAP45. Interacts with DNAI1. Interacts with IQDC.

Its subcellular location is the cytoplasm. It localises to the cytoskeleton. It is found in the cilium axoneme. The protein localises to the flagellum axoneme. In terms of biological role, microtubule inner protein (MIP) part of the dynein-decorated doublet microtubules (DMTs) in cilia axoneme. Important for proper ciliary and flagellar beating. May act in cooperation with CFAP45 and axonemal dynein subunit DNAH11. May play a role in cell growth and/or survival. The chain is Cilia- and flagella-associated protein 52 from Mus musculus (Mouse).